A 151-amino-acid polypeptide reads, in one-letter code: Decarboxylase nsrE (151 aa).

The 96-residue stretch at 31 to 126 (AGMTEEDYHN…VGDHENFADT (96 aa)) folds into the EthD domain.

Belongs to the tpcK family.

It catalyses the reaction atrochrysone carboxylate + H(+) = atrochrysone + CO2. The protein operates within secondary metabolite biosynthesis. In terms of biological role, decarboxylase; part of the gene cluster that mediates the biosynthesis of the tetrahydroxanthone dimer neosartorin, which exhibits antibacterial activity. The two different monomeric units appear to be synthesized by the same set of enzymes, among which the Baeyer-Villiger monooxygenase nsrF is the key enzyme for the divergence of the biosynthetic routes. The pathway begins with the synthesis of atrochrysone thioester by the polyketide synthase nsrB. The atrochrysone carboxyl ACP thioesterase nsrC then breaks the thioester bond and releases the atrochrysone carboxylic acid from AacuL. Atrochrysone carboxylic acid is decarboxylated by the decarboxylase nsrE, and oxidized by the anthrone oxygenase nsrD to yield emodin. Emodin is then reduced to emodin hydroquinone by the oxidoreductase nsrR. A-ring reduction by the short chain dehydrogenase nsrJ, dehydration by the scytalone dehydratase-like protein nsrI and probable spontaneous re-oxidation, results in overall deoxygenation to chrysophanol. The Baeyer-Villiger monooxygenase nsrF accepts chrysophanol as a substrate to insert one oxygen atom at two different positions to yield the precursors of both monomric units. NsrF is promiscuous/flexible in interacting with the 2 (non methylated and methylated) aromatic rings of chrysophanol, thus diverging the biosynthetic pathway at this point. After the hydrolysis of the lactones, methylesterification by the methyltransferase nsrG yields respectively moniliphenone and 2,2',6'-trihydroxy-4-methyl-6-methoxya-cyldiphenylmethanone. The next steps are the hydroxylation by the FAD-dependent monooxygenase nsrK, followed by isomerization by the monooxygenase nsrQ. The short chain dehydrogenase/reductase nsrO then catalyzes the C-5 ketoreduction to give the xanthone skeleton of blennolide C and 5-acetylblennolide A. The acetyltransferase nsrL has a strict substrate specificity and uses only blennolide A but not blennolide C to yield 5-acetylblennolide A as the single-acetylated product. In the final step of the biosynthesis, the heterodimerization of the 2 xanthones, blennolide C and 5-acetylblennolide A, is catalyzed by the cytochrome P450 monooxygenase nsrP. NsrP can utilize at least three different xanthones as its substrates to perform the dimerization reaction. The polypeptide is Decarboxylase nsrE (Aspergillus novofumigatus (strain IBT 16806)).